The sequence spans 402 residues: MVMTQRIAVLGATGSIGDSTLAILAAQPQHYDVYALSGYHRLDKLLALCQQFAPKRVGVPTAAVDEFAKRLSEAGLDIEVVGGETGLVDIATDSQTDTVVAAIVGAAGLPSTLAAARAGKRILLANKEALVMAGQVMINAVKTHHATLLPLDSEHNAIFQCLPFAIQQDNTQIHRLNHGVRKLWLTASGGPFLQQSFTQMQQASVAEAVKHPNWSMGQKISVDSATMMNKGLELIEACHLFDLPENKINVVIHPQSIIHSMVEYSDGSFLAQLGSPDMKTPIAHALSYPDRIDSGSQPLDLFALSGLEFIEPDLQKFACLRLAREAMQTGTHATIILNAANEIAVSAFLNNQIRLTDIADINEQALNEIQVSALTETADIDEILAIDNLARQHTEKLVARLV.

NADPH contacts are provided by Thr13, Gly14, Ser15, Ile16, and Asn126. Residue Lys127 coordinates 1-deoxy-D-xylulose 5-phosphate. NADPH is bound at residue Glu128. Asp152 is a binding site for Mn(2+). Ser153, Glu154, Ser188, and His211 together coordinate 1-deoxy-D-xylulose 5-phosphate. Glu154 is a Mn(2+) binding site. Gly217 contributes to the NADPH binding site. 1-deoxy-D-xylulose 5-phosphate is bound by residues Ser224, Asn229, Lys230, and Glu233. Glu233 lines the Mn(2+) pocket.

It belongs to the DXR family. Mg(2+) serves as cofactor. Mn(2+) is required as a cofactor.

It catalyses the reaction 2-C-methyl-D-erythritol 4-phosphate + NADP(+) = 1-deoxy-D-xylulose 5-phosphate + NADPH + H(+). It functions in the pathway isoprenoid biosynthesis; isopentenyl diphosphate biosynthesis via DXP pathway; isopentenyl diphosphate from 1-deoxy-D-xylulose 5-phosphate: step 1/6. Functionally, catalyzes the NADPH-dependent rearrangement and reduction of 1-deoxy-D-xylulose-5-phosphate (DXP) to 2-C-methyl-D-erythritol 4-phosphate (MEP). The protein is 1-deoxy-D-xylulose 5-phosphate reductoisomerase of Psychrobacter cryohalolentis (strain ATCC BAA-1226 / DSM 17306 / VKM B-2378 / K5).